Reading from the N-terminus, the 388-residue chain is Na(+)/H(+) antiporter NhaA (388 aa).

Residues M1–D11 are Cytoplasmic-facing. Residues A12–S31 traverse the membrane as a helical segment. Residues G32–N58 are Periplasmic-facing. A helical transmembrane segment spans residues M59–K80. Residues R81–F96 are Cytoplasmic-facing. Residues P97–N116 form a helical membrane-spanning segment. Residues Y117–T122 are Periplasmic-facing. A helical transmembrane segment spans residues R123–A130. The Cytoplasmic segment spans residues A131–I154. A helical transmembrane segment spans residues F155–T176. At N177–S180 the chain is on the periplasmic side. A helical transmembrane segment spans residues M181–C200. At G201–R204 the chain is on the cytoplasmic side. Residues T205 to S222 traverse the membrane as a helical segment. A topological domain (periplasmic) is located at residue G223. The helical transmembrane segment at V224–F236 threads the bilayer. The Cytoplasmic segment spans residues I237 to H253. Residues V254–A272 form a helical membrane-spanning segment. Residues G273 to S286 are Periplasmic-facing. The helical transmembrane segment at I287–L310 threads the bilayer. Topologically, residues A311–F339 are cytoplasmic. The helical transmembrane segment at T340–F350 threads the bilayer. At G351–L357 the chain is on the periplasmic side. The helical transmembrane segment at I358 to L380 threads the bilayer. Over R381–V388 the chain is Cytoplasmic.

It belongs to the NhaA Na(+)/H(+) (TC 2.A.33) antiporter family.

Its subcellular location is the cell inner membrane. The catalysed reaction is Na(+)(in) + 2 H(+)(out) = Na(+)(out) + 2 H(+)(in). Functionally, na(+)/H(+) antiporter that extrudes sodium in exchange for external protons. The sequence is that of Na(+)/H(+) antiporter NhaA from Shigella flexneri serotype 5b (strain 8401).